The sequence spans 776 residues: Kinesin-like protein KIN-8A (776 aa).

2 disordered regions span residues 1-31 (MPVS…RGGA) and 80-135 (VGEV…KSSH). Low complexity predominate over residues 7 to 26 (ASAAGGQPWSSAAPAPASAP). Positions 123–132 (PPPPPAPPPK) are enriched in pro residues. A Kinesin motor domain is found at 205-534 (RIMVFVRLRP…LHWADRAKEI (330 aa)). Residue 297 to 304 (GATGAGKT) coordinates ATP. Positions 554–592 (TDQAKLVLELQKENSELRQQLARQQQKLLTVQAQTLASN) form a coiled coil. Residues 590–611 (ASNASPQQSPAPSAQISTPCST) are disordered. Residues 593–604 (ASPQQSPAPSAQ) show a composition bias toward low complexity. The stretch at 634–671 (AAENAQVRDLQRKVKAMEAEIEKMKKEHLLQLKQKDEF) forms a coiled coil.

The protein belongs to the TRAFAC class myosin-kinesin ATPase superfamily. Kinesin family. KIN-8 subfamily.

In Oryza sativa subsp. japonica (Rice), this protein is Kinesin-like protein KIN-8A.